The primary structure comprises 127 residues: Apolipoprotein C-IV (127 aa).

The first 27 residues, 1–27, serve as a signal peptide directing secretion; the sequence is MSLLRNRLQDLPALCLCVLVLACIGAC. Asn63 carries an N-linked (GlcNAc...) asparagine glycan.

It belongs to the apolipoprotein C4 family.

The protein resides in the secreted. In terms of biological role, may participate in lipoprotein metabolism. The sequence is that of Apolipoprotein C-IV (APOC4) from Colobus guereza (Mantled guereza).